Consider the following 142-residue polypeptide: Large ribosomal subunit protein bL17 (142 aa).

Belongs to the bacterial ribosomal protein bL17 family. In terms of assembly, part of the 50S ribosomal subunit. Contacts protein L32.

This Wolbachia sp. subsp. Brugia malayi (strain TRS) protein is Large ribosomal subunit protein bL17.